The sequence spans 323 residues: Di/tripeptide transport ATP-binding protein DppF (323 aa).

The ABC transporter domain occupies 5 to 254; it reads LTARDLTRHY…PLHPYTRALL (250 aa). 47–54 serves as a coordination point for ATP; it reads GESGCGKS.

The protein belongs to the ABC transporter superfamily. The complex is composed of two ATP-binding proteins (DppD and DppF), two transmembrane proteins (DppB and DppC) and a solute-binding protein (DppA1-A5). Five orthologous SBPs (DppA1-A5) are present in P.aeruginosa, which increases the substrate specificity of the DppBCDF transporter.

Its subcellular location is the cell inner membrane. The enzyme catalyses a dipeptide(out) + ATP + H2O = a dipeptide(in) + ADP + phosphate + H(+). In terms of biological role, part of the ABC transporter DppABCDF involved in the uptake of various di/tripeptides. Is also involved in the uptake of phaseolotoxin, a toxic tripeptide inhibiting the enzyme ornithine carbamoyltransferase. Responsible for energy coupling to the transport system. This chain is Di/tripeptide transport ATP-binding protein DppF, found in Pseudomonas aeruginosa (strain UCBPP-PA14).